The primary structure comprises 415 residues: Gamma-glutamyl phosphate reductase (415 aa).

It belongs to the gamma-glutamyl phosphate reductase family.

The protein resides in the cytoplasm. It carries out the reaction L-glutamate 5-semialdehyde + phosphate + NADP(+) = L-glutamyl 5-phosphate + NADPH + H(+). It participates in amino-acid biosynthesis; L-proline biosynthesis; L-glutamate 5-semialdehyde from L-glutamate: step 2/2. Functionally, catalyzes the NADPH-dependent reduction of L-glutamate 5-phosphate into L-glutamate 5-semialdehyde and phosphate. The product spontaneously undergoes cyclization to form 1-pyrroline-5-carboxylate. This Bacillus cereus (strain 03BB102) protein is Gamma-glutamyl phosphate reductase.